Here is an 816-residue protein sequence, read N- to C-terminus: MAVSLDDDVPLILTLDEGGSAPLAPSNGLGQEELPSKNGGSYAIHDSQAPSLSSGGESSPSSPAHNWEMNYQEAAIYLQEGENNDKFFTHPKDAKALAAYLFAHNHLFYLMELATALLLLLLSLCEAPAVPALRLGIYVHATLELFALMVVVFELCMKLRWLGLHTFIRHKRTMVKTSVLVVQFVEAIVVLVRQMSHVRVTRALRCIFLVDCRYCGGVRRNLRQIFQSLPPFMDILLLLLFFMIIFAILGFYLFSPNPSDPYFSTLENSIVSLFVLLTTANFPDVMMPSYSRNPWSCVFFIVYLSIELYFIMNLLLAVVFDTFNDIEKRKFKSLLLHKRTAIQHAYRLLISQRRPAGISYRQFEGLMRFYKPRMSARERYLTFKALNQNNTPLLSLKDFYDIYEVAALKWKAKKNREHWFDELPRTALLIFKGINILVKSKAFQYFMYLVVAVNGVWILVETFMLKGGNFFSKHVPWSYLVFLTIYGVELFLKVAGLGPVEYLSSGWNLFDFSVTVFAFLGLLALALNMEPFYFIVVLRPLQLLRLFKLKERYRNVLDTMFELLPRMASLGLTLLIFYYSFAIVGMEFFCGIVFPNCCNTSTVADAYRWRNHTVGNRTVVEEGYYYLNNFDNILNSFVTLFELTVVNNWYIIMEGVTSQTSHWSRLYFMTFYIVTMVVMTIIVAFILEAFVFRMNYSRKNQDSEVDGGITLEKEISKEELVAVLELYREARGASSDVTRLLETLSQMERYQQHSMVFLGRRSRTKSDLSLKMYQEEIQEWYEEHAREQEQQRQLSSSAAPAAQQPPGSRQRSQTVT.

At 1-112 (MAVSLDDDVP…AHNHLFYLME (112 aa)) the chain is on the cytoplasmic side. The segment at 17–64 (EGGSAPLAPSNGLGQEELPSKNGGSYAIHDSQAPSLSSGGESSPSSPA) is disordered. The segment covering 50 to 63 (PSLSSGGESSPSSP) has biased composition (low complexity). The helical transmembrane segment at 113–133 (LATALLLLLLSLCEAPAVPAL) threads the bilayer. Position 134 (Arg134) is a topological domain, extracellular. The helical transmembrane segment at 135–155 (LGIYVHATLELFALMVVVFEL) threads the bilayer. Residues 156–177 (CMKLRWLGLHTFIRHKRTMVKT) are Cytoplasmic-facing. The chain crosses the membrane as a helical span at residues 178–198 (SVLVVQFVEAIVVLVRQMSHV). Over 199 to 200 (RV) the chain is Extracellular. A helical membrane pass occupies residues 201–220 (TRALRCIFLVDCRYCGGVRR). Residues 221–234 (NLRQIFQSLPPFMD) lie on the Cytoplasmic side of the membrane. Residues 235–255 (ILLLLLFFMIIFAILGFYLFS) form a helical membrane-spanning segment. The Extracellular portion of the chain corresponds to 256–262 (PNPSDPY). The helical; Pore-forming intramembrane region spans 263–286 (FSTLENSIVSLFVLLTTANFPDVM). Residues 287–294 (MPSYSRNP) are Extracellular-facing. Residues 295–315 (WSCVFFIVYLSIELYFIMNLL) traverse the membrane as a helical segment. Over 316–444 (LAVVFDTFND…NILVKSKAFQ (129 aa)) the chain is Cytoplasmic. Residues 445–465 (YFMYLVVAVNGVWILVETFML) traverse the membrane as a helical segment. Over 466-479 (KGGNFFSKHVPWSY) the chain is Extracellular. The chain crosses the membrane as a helical span at residues 480–500 (LVFLTIYGVELFLKVAGLGPV). The Cytoplasmic portion of the chain corresponds to 501–503 (EYL). A helical transmembrane segment spans residues 504–526 (SSGWNLFDFSVTVFAFLGLLALA). Residues 527 to 534 (LNMEPFYF) are Extracellular-facing. Residues 535 to 549 (IVVLRPLQLLRLFKL) form a helical membrane-spanning segment. At 550-573 (KERYRNVLDTMFELLPRMASLGLT) the chain is on the cytoplasmic side. Residues 574–594 (LLIFYYSFAIVGMEFFCGIVF) traverse the membrane as a helical segment. The Extracellular portion of the chain corresponds to 595–629 (PNCCNTSTVADAYRWRNHTVGNRTVVEEGYYYLNN). N-linked (GlcNAc...) asparagine glycosylation is found at Asn599, Asn611, and Asn616. The helical; Pore-forming intramembrane region spans 630–653 (FDNILNSFVTLFELTVVNNWYIIM). The Extracellular segment spans residues 654 to 670 (EGVTSQTSHWSRLYFMT). Residues 671-691 (FYIVTMVVMTIIVAFILEAFV) traverse the membrane as a helical segment. At 692–816 (FRMNYSRKNQ…GSRQRSQTVT (125 aa)) the chain is on the cytoplasmic side. Positions 769–796 (SLKMYQEEIQEWYEEHAREQEQQRQLSS) form a coiled coil. The tract at residues 782–816 (EEHAREQEQQRQLSSSAAPAAQQPPGSRQRSQTVT) is disordered. Over residues 791–816 (QRQLSSSAAPAAQQPPGSRQRSQTVT) the composition is skewed to low complexity.

This sequence belongs to the calcium channel alpha-1 subunit (TC 1.A.1.11) family. Two pore calcium channel subfamily. In terms of assembly, dimer. Interacts with MTOR; the interaction is required for TPCN1 ATP sensitivity. Interacts with STX7, STX8 and STX12. Interacts with JPT2. Found in a complex with LSM12, TPCN1 and TPCN2. N-glycosylated. In terms of tissue distribution, highest expression found in the heart and kidney, and lowest expression found in the spleen.

It is found in the lysosome membrane. The protein localises to the endosome membrane. It localises to the early endosome membrane. The protein resides in the recycling endosome membrane. It catalyses the reaction Na(+)(in) = Na(+)(out). The enzyme catalyses Ca(2+)(in) = Ca(2+)(out). Na(+) current is inhibited by ATP in a MTORC-dependent manner. ATP sensitivity is independent of PI(3,5)P2. Probably regulated by Mg(2+) ions, cytosolic Mg(2+) selectively inhibits outward current while lysosomal Mg(2+) modestly inhibits both the outward and inward currents. In the absence of Mg(2+), NAADP readily activates TPCN2, with properties similar to PI(3,5)P2. Both current elicited by PI(3,5)P2 as well as NAADP are inhibited by tetrandrine. Intracellular channel initially characterized as a non-selective Ca(2+)-permeable channel activated by NAADP (nicotinic acid adenine dinucleotide phosphate), it is also a voltage-gated highly-selective Na(+) channel activated directly by PI(3,5)P2 (phosphatidylinositol 3,5-bisphosphate) that senses pH changes and confers electrical excitability to organelles. Localizes to the early and recycling endosomes membranes where it plays a role in the uptake and processing of proteins and regulates organellar membrane excitability, membrane trafficking and pH homeostasis. Ion selectivity is not fixed but rather agonist-dependent and under defined ionic conditions, can be readily activated by both NAADP and PI(3,5)P2. Required for mTOR-dependent nutrient sensing. Its function is as follows. (Microbial infection) During Ebola virus (EBOV) infection, controls the movement of endosomes containing virus particles and is required by EBOV to escape from the endosomal network into the cell cytoplasm. The protein is Two pore channel protein 1 of Homo sapiens (Human).